Consider the following 392-residue polypeptide: Norsolorinic acid reductase B (392 aa).

D75 serves as a coordination point for NADP(+). Residue Y80 is the Proton donor of the active site. NADP(+)-binding positions include 184-185 (SD), Q210, 239-249 (GTLGQGSFQTE), and 311-319 (RKLEHIQGN). A disordered region spans residues 242 to 263 (GQGSFQTEEGRKQREKDNPGRK). The span at 249 to 261 (EEGRKQREKDNPG) shows a compositional bias: basic and acidic residues.

Belongs to the aldo/keto reductase family. Aldo/keto reductase 2 subfamily.

It participates in mycotoxin biosynthesis. In terms of biological role, norsolorinic acid reductase; part of the fragmented gene cluster that mediates the biosynthesis of dothistromin (DOTH), a polyketide toxin very similar in structure to the aflatoxin precursor, versicolorin B. The first step of the pathway is the conversion of acetate to norsolorinic acid (NOR) and requires the fatty acid synthase subunits hexA and hexB, as well as the polyketide synthase pksA. PksA combines a hexanoyl starter unit and 7 malonyl-CoA extender units to synthesize the precursor NOR. The hexanoyl starter unit is provided to the acyl-carrier protein (ACP) domain by the fungal fatty acid synthase hexA/hexB. The second step is the conversion of NOR to averantin (AVN) and requires the norsolorinic acid ketoreductase nor1, which catalyzes the dehydration of norsolorinic acid to form (1'S)-averantin. The cytochrome P450 monooxygenase avnA then catalyzes the hydroxylation of AVN to 5'hydroxyaverantin (HAVN). The next step is performed by adhA that transforms HAVN to averufin (AVF). Averufin might then be converted to hydroxyversicolorone by cypX and avfA. Hydroxyversicolorone is further converted versiconal hemiacetal acetate (VHA) by moxY. VHA is then the substrate for the versiconal hemiacetal acetate esterase est1 to yield versiconal (VAL). Versicolorin B synthase vbsA then converts VAL to versicolorin B (VERB) by closing the bisfuran ring. Then, the activity of the versicolorin B desaturase verB leads to versicolorin A (VERA). DotB, a predicted chloroperoxidase, may perform epoxidation of the A-ring of VERA. Alternatively, a cytochrome P450, such as cypX or avnA could catalyze this step. It is also possible that another, uncharacterized, cytochrome P450 enzyme is responsible for this step. Opening of the epoxide could potentially be achieved by the epoxide hydrolase epoA. However, epoA seems not to be required for DOTH biosynthesis, but other epoxide hydrolases may have the ability to complement this hydrolysis. Alternatively, opening of the epoxide ring could be achieved non-enzymatically. The next step is the deoxygenation of ring A to yield the 5,8-dihydroxyanthraquinone which is most likely catalyzed by the NADPH dehydrogenase encoded by ver1. The last stages of DOTH biosynthesis are proposed to involve hydroxylation of the bisfuran. OrdB and norB might have oxidative roles here. An alternative possibility is that cytochrome P450 monoogenases such as avnA and cypX might perform these steps in addition to previously proposed steps. This is Norsolorinic acid reductase B from Dothistroma septosporum (strain NZE10 / CBS 128990) (Red band needle blight fungus).